Consider the following 245-residue polypeptide: Ubiquinone/menaquinone biosynthesis C-methyltransferase UbiE (245 aa).

Residues Thr71, Asp92, and 118–119 (DA) contribute to the S-adenosyl-L-methionine site.

The protein belongs to the class I-like SAM-binding methyltransferase superfamily. MenG/UbiE family.

The catalysed reaction is a 2-demethylmenaquinol + S-adenosyl-L-methionine = a menaquinol + S-adenosyl-L-homocysteine + H(+). It catalyses the reaction a 2-methoxy-6-(all-trans-polyprenyl)benzene-1,4-diol + S-adenosyl-L-methionine = a 5-methoxy-2-methyl-3-(all-trans-polyprenyl)benzene-1,4-diol + S-adenosyl-L-homocysteine + H(+). It functions in the pathway quinol/quinone metabolism; menaquinone biosynthesis; menaquinol from 1,4-dihydroxy-2-naphthoate: step 2/2. The protein operates within cofactor biosynthesis; ubiquinone biosynthesis. Functionally, methyltransferase required for the conversion of demethylmenaquinol (DMKH2) to menaquinol (MKH2) and the conversion of 2-polyprenyl-6-methoxy-1,4-benzoquinol (DDMQH2) to 2-polyprenyl-3-methyl-6-methoxy-1,4-benzoquinol (DMQH2). In Neisseria gonorrhoeae (strain ATCC 700825 / FA 1090), this protein is Ubiquinone/menaquinone biosynthesis C-methyltransferase UbiE.